Consider the following 531-residue polypeptide: O-phosphoserine--tRNA(Cys) ligase (531 aa).

Residues 189-191, 234-236, 276-277, and asparagine 319 each bind substrate; these read HMT, SAS, and YY.

Belongs to the class-II aminoacyl-tRNA synthetase family. O-phosphoseryl-tRNA(Cys) synthetase subfamily. As to quaternary structure, homotetramer. Interacts with SepCysS.

It catalyses the reaction tRNA(Cys) + O-phospho-L-serine + ATP = O-phospho-L-seryl-tRNA(Cys) + AMP + diphosphate. Functionally, catalyzes the attachment of O-phosphoserine (Sep) to tRNA(Cys). The chain is O-phosphoserine--tRNA(Cys) ligase from Methanospirillum hungatei JF-1 (strain ATCC 27890 / DSM 864 / NBRC 100397 / JF-1).